Reading from the N-terminus, the 282-residue chain is uncharacterized protein (282 aa).

The 77-residue stretch at 4 to 80 (STLTSKLESL…VDYLSDEKQY (77 aa)) folds into the HTH rpiR-type domain. The segment at residues 40 to 59 (VAELAQAAGVSSASVIRFTR) is a DNA-binding region (H-T-H motif). Residues 125–265 (IAQKIVEAKR…FFKYLTLTNE (141 aa)) enclose the SIS domain.

This is an uncharacterized protein from Providencia stuartii.